Here is a 507-residue protein sequence, read N- to C-terminus: ATP synthase subunit alpha, chloroplastic (507 aa).

170 to 177 (GDRQTGKT) provides a ligand contact to ATP. Phosphothreonine is present on threonine 257.

The protein belongs to the ATPase alpha/beta chains family. In terms of assembly, F-type ATPases have 2 components, CF(1) - the catalytic core - and CF(0) - the membrane proton channel. CF(1) has five subunits: alpha(3), beta(3), gamma(1), delta(1), epsilon(1). CF(0) has four main subunits: a, b, b' and c.

The protein resides in the plastid. It is found in the chloroplast thylakoid membrane. It catalyses the reaction ATP + H2O + 4 H(+)(in) = ADP + phosphate + 5 H(+)(out). Functionally, produces ATP from ADP in the presence of a proton gradient across the membrane. The alpha chain is a regulatory subunit. The chain is ATP synthase subunit alpha, chloroplastic from Capsella bursa-pastoris (Shepherd's purse).